The sequence spans 89 residues: CRISPR-associated endoribonuclease Cas2 2 (89 aa).

Aspartate 9 contributes to the Mg(2+) binding site.

Belongs to the CRISPR-associated endoribonuclease Cas2 protein family. In terms of assembly, homodimer, forms a heterotetramer with a Cas1 homodimer. Mg(2+) serves as cofactor.

CRISPR (clustered regularly interspaced short palindromic repeat), is an adaptive immune system that provides protection against mobile genetic elements (viruses, transposable elements and conjugative plasmids). CRISPR clusters contain sequences complementary to antecedent mobile elements and target invading nucleic acids. CRISPR clusters are transcribed and processed into CRISPR RNA (crRNA). Functions as a ssRNA-specific endoribonuclease. Involved in the integration of spacer DNA into the CRISPR cassette. The polypeptide is CRISPR-associated endoribonuclease Cas2 2 (Methanospirillum hungatei JF-1 (strain ATCC 27890 / DSM 864 / NBRC 100397 / JF-1)).